The primary structure comprises 129 residues: M-zodatoxin-Lt8j (129 aa).

The signal sequence occupies residues 1–20 (MKYFVVALALVAAFACIAES). Positions 21–60 (KPAESEHELAEVEEENELADLEDAVWLEHLADLSDLEEAR) are excised as a propeptide.

Belongs to the cationic peptide 06 (cytoinsectotoxin) family. Expressed by the venom gland.

It localises to the secreted. Its function is as follows. Insecticidal, cytolytic and antimicrobial peptide. Forms voltage-dependent, ion-permeable channels in membranes. At high concentration causes cell membrane lysis. This Lachesana tarabaevi (Spider) protein is M-zodatoxin-Lt8j (cit 1-9).